Reading from the N-terminus, the 81-residue chain is Cytochrome b559 subunit alpha (81 aa).

The chain crosses the membrane as a helical span at residues 22–36; it reads VIHSITIPSLFIAGW. A heme-binding site is contributed by His-24.

Belongs to the PsbE/PsbF family. In terms of assembly, heterodimer of an alpha subunit and a beta subunit. PSII is composed of 1 copy each of membrane proteins PsbA, PsbB, PsbC, PsbD, PsbE, PsbF, PsbH, PsbI, PsbJ, PsbK, PsbL, PsbM, PsbT, PsbX, PsbY, PsbZ, Psb30/Ycf12, at least 3 peripheral proteins of the oxygen-evolving complex and a large number of cofactors. It forms dimeric complexes. Heme b serves as cofactor.

It localises to the plastid. It is found in the chloroplast thylakoid membrane. In terms of biological role, this b-type cytochrome is tightly associated with the reaction center of photosystem II (PSII). PSII is a light-driven water:plastoquinone oxidoreductase that uses light energy to abstract electrons from H(2)O, generating O(2) and a proton gradient subsequently used for ATP formation. It consists of a core antenna complex that captures photons, and an electron transfer chain that converts photonic excitation into a charge separation. The sequence is that of Cytochrome b559 subunit alpha from Cyanidioschyzon merolae (strain NIES-3377 / 10D) (Unicellular red alga).